Here is a 383-residue protein sequence, read N- to C-terminus: Phospho-N-acetylmuramoyl-pentapeptide-transferase (383 aa).

9 consecutive transmembrane segments (helical) span residues 26 to 46, 73 to 93, 98 to 118, 131 to 151, 182 to 202, 221 to 241, 258 to 278, 283 to 305, and 360 to 380; these read TAGA…GVIE, TMGG…WAEL, IILL…DDFL, IYKI…LYYF, IFLP…IPFA, GLAI…SYVS, AGEV…FLWF, AQVF…IALF, and QVVF…IATL.

Belongs to the glycosyltransferase 4 family. MraY subfamily. It depends on Mg(2+) as a cofactor.

The protein resides in the cell inner membrane. The enzyme catalyses UDP-N-acetyl-alpha-D-muramoyl-L-alanyl-gamma-D-glutamyl-meso-2,6-diaminopimeloyl-D-alanyl-D-alanine + di-trans,octa-cis-undecaprenyl phosphate = di-trans,octa-cis-undecaprenyl diphospho-N-acetyl-alpha-D-muramoyl-L-alanyl-D-glutamyl-meso-2,6-diaminopimeloyl-D-alanyl-D-alanine + UMP. It participates in cell wall biogenesis; peptidoglycan biosynthesis. In terms of biological role, catalyzes the initial step of the lipid cycle reactions in the biosynthesis of the cell wall peptidoglycan: transfers peptidoglycan precursor phospho-MurNAc-pentapeptide from UDP-MurNAc-pentapeptide onto the lipid carrier undecaprenyl phosphate, yielding undecaprenyl-pyrophosphoryl-MurNAc-pentapeptide, known as lipid I. In Brachyspira hyodysenteriae (strain ATCC 49526 / WA1), this protein is Phospho-N-acetylmuramoyl-pentapeptide-transferase.